Consider the following 374-residue polypeptide: Quinolinate synthase (374 aa).

His53 and Ser70 together coordinate iminosuccinate. Position 116 (Cys116) interacts with [4Fe-4S] cluster. Residues 148–150 (YMN) and Ser169 contribute to the iminosuccinate site. Cys236 contacts [4Fe-4S] cluster. Iminosuccinate is bound by residues 262-264 (HPE) and Thr279. Cys327 contributes to the [4Fe-4S] cluster binding site.

Belongs to the quinolinate synthase family. Type 3 subfamily. [4Fe-4S] cluster is required as a cofactor.

It localises to the cytoplasm. It catalyses the reaction iminosuccinate + dihydroxyacetone phosphate = quinolinate + phosphate + 2 H2O + H(+). Its pathway is cofactor biosynthesis; NAD(+) biosynthesis; quinolinate from iminoaspartate: step 1/1. Catalyzes the condensation of iminoaspartate with dihydroxyacetone phosphate to form quinolinate. The polypeptide is Quinolinate synthase (Haloarcula marismortui (strain ATCC 43049 / DSM 3752 / JCM 8966 / VKM B-1809) (Halobacterium marismortui)).